The primary structure comprises 390 residues: Cell division protein FtsZ (390 aa).

GTP contacts are provided by residues 21–25 (GGGNN), 108–110 (GTG), Glu139, Arg143, and Asp187. Residues 315 to 390 (FDDKPTSHGR…EERRSRRTRR (76 aa)) form a disordered region. Positions 326 to 360 (SGSTGFGTSVNTSSNATSKDESFTSNSSNAQATDS) are enriched in polar residues. The span at 361–384 (VSERTHTTKEDDIPSFIRNREERR) shows a compositional bias: basic and acidic residues.

Belongs to the FtsZ family. As to quaternary structure, homodimer. Polymerizes to form a dynamic ring structure in a strictly GTP-dependent manner. Interacts directly with several other division proteins.

The protein resides in the cytoplasm. In terms of biological role, essential cell division protein that forms a contractile ring structure (Z ring) at the future cell division site. The regulation of the ring assembly controls the timing and the location of cell division. One of the functions of the FtsZ ring is to recruit other cell division proteins to the septum to produce a new cell wall between the dividing cells. Binds GTP and shows GTPase activity. The chain is Cell division protein FtsZ from Staphylococcus aureus (strain NCTC 8325 / PS 47).